An 896-amino-acid polypeptide reads, in one-letter code: Protein translocase subunit SecA (896 aa).

ATP-binding positions include glutamine 87, glycine 105–threonine 109, and aspartate 507. Positions glutamate 853–proline 879 are disordered. The span at threonine 866–arginine 876 shows a compositional bias: basic and acidic residues. 4 residues coordinate Zn(2+): cysteine 880, cysteine 882, cysteine 891, and histidine 892.

The protein belongs to the SecA family. As to quaternary structure, monomer and homodimer. Part of the essential Sec protein translocation apparatus which comprises SecA, SecYEG and auxiliary proteins SecDF-YajC and YidC. Zn(2+) is required as a cofactor.

It localises to the cell inner membrane. Its subcellular location is the cytoplasm. It carries out the reaction ATP + H2O + cellular proteinSide 1 = ADP + phosphate + cellular proteinSide 2.. Part of the Sec protein translocase complex. Interacts with the SecYEG preprotein conducting channel. Has a central role in coupling the hydrolysis of ATP to the transfer of proteins into and across the cell membrane, serving both as a receptor for the preprotein-SecB complex and as an ATP-driven molecular motor driving the stepwise translocation of polypeptide chains across the membrane. The polypeptide is Protein translocase subunit SecA (Legionella pneumophila (strain Corby)).